The following is a 336-amino-acid chain: Phenylalanine--tRNA ligase alpha subunit (336 aa).

Position 255 (glutamate 255) interacts with Mg(2+).

The protein belongs to the class-II aminoacyl-tRNA synthetase family. Phe-tRNA synthetase alpha subunit type 1 subfamily. As to quaternary structure, tetramer of two alpha and two beta subunits. The cofactor is Mg(2+).

The protein resides in the cytoplasm. It carries out the reaction tRNA(Phe) + L-phenylalanine + ATP = L-phenylalanyl-tRNA(Phe) + AMP + diphosphate + H(+). The polypeptide is Phenylalanine--tRNA ligase alpha subunit (Gemmatimonas aurantiaca (strain DSM 14586 / JCM 11422 / NBRC 100505 / T-27)).